The following is a 186-amino-acid chain: Peptidyl-tRNA hydrolase (186 aa).

Tyrosine 14 is a tRNA binding site. Catalysis depends on histidine 19, which acts as the Proton acceptor. TRNA is bound by residues tyrosine 61, asparagine 63, and asparagine 107.

The protein belongs to the PTH family. In terms of assembly, monomer.

The protein resides in the cytoplasm. The catalysed reaction is an N-acyl-L-alpha-aminoacyl-tRNA + H2O = an N-acyl-L-amino acid + a tRNA + H(+). Functionally, hydrolyzes ribosome-free peptidyl-tRNAs (with 1 or more amino acids incorporated), which drop off the ribosome during protein synthesis, or as a result of ribosome stalling. Its function is as follows. Catalyzes the release of premature peptidyl moieties from peptidyl-tRNA molecules trapped in stalled 50S ribosomal subunits, and thus maintains levels of free tRNAs and 50S ribosomes. This is Peptidyl-tRNA hydrolase from Helicobacter pylori (strain G27).